A 537-amino-acid chain; its full sequence is Beta-hexosaminidase subunit beta (537 aa).

The first 23 residues, 1–23, serve as a signal peptide directing secretion; sequence MPGSPRRAPGLLLQALVAMVSLA. Asn-62 carries an N-linked (GlcNAc...) asparagine glycan. Cys-69 and Cys-115 are joined by a disulfide. N-linked (GlcNAc...) asparagine glycans are attached at residues Asn-168 and Asn-305. 2 disulfides stabilise this stretch: Cys-287–Cys-338 and Cys-512–Cys-529. The active-site Proton donor is the Glu-333.

Belongs to the glycosyl hydrolase 20 family. There are 3 forms of beta-hexosaminidase: hexosaminidase A is a heterodimer composed of one subunit alpha and one subunit beta (chain A and B); hexosaminidase B is a homodimer of two beta subunits (two chains A and B); hexosaminidase S is a homodimer of two alpha subunits. The composition of the dimer (isozyme A versus isozyme S) has a significant effect on the substrate specificity of the alpha subunit active site.

The protein localises to the lysosome. The protein resides in the cytoplasmic vesicle. It is found in the secretory vesicle. It localises to the cortical granule. The catalysed reaction is Hydrolysis of terminal non-reducing N-acetyl-D-hexosamine residues in N-acetyl-beta-D-hexosaminides.. The enzyme catalyses N-acetyl-beta-D-galactosaminyl-(1-&gt;4)-beta-D-3-sulfogalactosyl-(1-&gt;4)-beta-D-glucosyl-(1&lt;-&gt;1')-ceramide + H2O = a beta-D-3-sulfogalactosyl-(1-&gt;4)-beta-D-glucosyl-(1&lt;-&gt;1')-ceramide + N-acetyl-beta-D-galactosamine. It carries out the reaction a ganglioside GM2 (d18:1(4E)) + H2O = a ganglioside GM3 (d18:1(4E)) + N-acetyl-beta-D-galactosamine. It catalyses the reaction a ganglioside GM2 + H2O = a ganglioside GM3 + N-acetyl-beta-D-galactosamine. The catalysed reaction is beta-D-GalNAc-(1-&gt;4)-alpha-L-IdoA-(1-&gt;3)-beta-D-GalNAc-4-sulfate-(1-&gt;4)-alpha-L-IdoA-(1-&gt;3)-D-GalNAc-4-sulfate + H2O = alpha-L-IdoA-(1-&gt;3)-beta-D-GalNAc-4-sulfate-(1-&gt;4)-alpha-L-IdoA-(1-&gt;3)-D-GalNAc-4-sulfate + N-acetyl-D-galactosamine. The enzyme catalyses N-acetyl-beta-D-6-sulfogalactosaminyl-(1-&gt;4)-alpha-L-iduronyl-(1-&gt;3)-N-acetyl-D-6-sulfogalactosamine + H2O = alpha-L-iduronyl-(1-&gt;3)-N-acetyl-D-6-sulfogalactosamine + N-acetyl-D-6-sulfogalactosamine. Its activity is regulated as follows. Addition of GM2A stimulates the hydrolysis of sulfated glycosphingolipid SM2 and the ganglioside GM2. Functionally, hydrolyzes the non-reducing end N-acetyl-D-hexosamine and/or sulfated N-acetyl-D-hexosamine of glycoconjugates, such as the oligosaccharide moieties from proteins and neutral glycolipids, or from certain mucopolysaccharides. The isozyme B does not hydrolyze each of these substrates, however hydrolyzes efficiently neutral oligosaccharide. Only the isozyme A is responsible for the degradation of GM2 gangliosides in the presence of GM2A. During fertilization is responsible, at least in part, for the zona block to polyspermy. Present in the cortical granules of non-activated oocytes, is exocytosed during the cortical reaction in response to oocyte activation and inactivates the sperm galactosyltransferase-binding site, accounting for the block in sperm binding to the zona pellucida. The chain is Beta-hexosaminidase subunit beta from Rattus norvegicus (Rat).